The following is a 402-amino-acid chain: Cholinephosphotransferase 1 (402 aa).

Over 1 to 62 (MGLAEGLAAR…LVEKVPLWLA (62 aa)) the chain is Cytoplasmic. Residues 63–83 (PNTITMVGLLLNVLSTLILVC) traverse the membrane as a helical segment. Asparagine 64 contributes to the CDP-choline binding site. The Lumenal portion of the chain corresponds to 84–93 (YCPTATEGAP). A helical membrane pass occupies residues 94–118 (FWTYLLCAIGLFVYQSLDAIDGKQA). Residues aspartate 111 and aspartate 114 each coordinate Mg(2+). Arginine 119 lines the CDP-choline pocket. At 119–125 (RRTNSSS) the chain is on the cytoplasmic side. A helical transmembrane segment spans residues 126-150 (PLGEMFDHGCDSISIVFVNLGTIAA). A Mg(2+)-binding site is contributed by aspartate 132. The Proton acceptor role is filled by histidine 133. Residue aspartate 136 coordinates Mg(2+). Residues 151–160 (VRLGTLPGWM) lie on the Lumenal side of the membrane. The chain crosses the membrane as a helical span at residues 161-179 (FYCCFVGMFMFYCAQWQTY). Topologically, residues 180 to 190 (VCGTLKFGIID) are cytoplasmic. A helical transmembrane segment spans residues 191 to 207 (VTELQISVTVMFLMTAV). Residues 208 to 222 (CGPELWDYEIPFTGL) lie on the Lumenal side of the membrane. Residues 223 to 248 (PMKTIPLLGIIGGTVYSCSNYFRVIL) form a helical membrane-spanning segment. Topologically, residues 249-265 (SGGVGKNGSTVAGTSVL) are cytoplasmic. Residues 266 to 281 (SPGLHIGLVLLLALMI) traverse the membrane as a helical segment. The Lumenal portion of the chain corresponds to 282-293 (YKKSTTNLFLQN). The helical transmembrane segment at 294–316 (PCLYTLAFGFVSAKITIKLVIAH) threads the bilayer. The Cytoplasmic portion of the chain corresponds to 317 to 329 (MTKSEISLQDTAF). The chain crosses the membrane as a helical span at residues 330–339 (IGPGLLFFNQ). At 340-346 (YFNSFID) the chain is on the lumenal side. Residues 347-376 (EYIVLWIAMVISFADLLRYCISVCLQIATH) form a helical membrane-spanning segment. Topologically, residues 377–402 (LRISVFRISSNQAAEQVQTQKQKLTD) are cytoplasmic.

It belongs to the CDP-alcohol phosphatidyltransferase class-I family. In terms of assembly, homodimer. Mg(2+) serves as cofactor. It depends on Mn(2+) as a cofactor.

Its subcellular location is the golgi apparatus membrane. The catalysed reaction is CDP-choline + a 1,2-diacyl-sn-glycerol = a 1,2-diacyl-sn-glycero-3-phosphocholine + CMP + H(+). It carries out the reaction 1,2-dioctanoyl-sn-glycerol + CDP-choline = 1,2-dioctanoyl-sn-glycero-3-phosphocholine + CMP + H(+). The enzyme catalyses 1-octadecanoyl-2-(5Z,8Z,11Z,14Z-eicosatetraenoyl)-sn-glycerol + CDP-choline = 1-octadecanoyl-2-(5Z,8Z,11Z,14Z-eicosatetraenoyl)-sn-glycero-3-phosphocholine + CMP + H(+). It catalyses the reaction 1-hexadecanoyl-2-(9Z-octadecenoyl)-sn-glycerol + CDP-choline = 1-hexadecanoyl-2-(9Z-octadecenoyl)-sn-glycero-3-phosphocholine + CMP + H(+). The catalysed reaction is 1-hexadecanoyl-2-(4Z,7Z,10Z,13Z,16Z,19Z-docosahexaenoyl)-sn-glycerol + CDP-choline = 1-hexadecanoyl-2-(4Z,7Z,10Z,13Z,16Z,19Z-docosahexaenoyl)-sn-glycero-3-phosphocholine + CMP + H(+). It participates in phospholipid metabolism; phosphatidylcholine biosynthesis; phosphatidylcholine from phosphocholine: step 2/2. Its function is as follows. Catalyzes the final step of de novo phosphatidylcholine (PC) synthesis, i.e. the transfer of choline phosphate from CDP-choline to the free hydroxyl of a diacylglycerol (DAG), producing a PC. It thereby plays a central role in the formation and maintenance of vesicular membranes. Shows a high preference for CDP-choline over CDP-ethanolamine as substrate. In Xenopus laevis (African clawed frog), this protein is Cholinephosphotransferase 1 (chpt1).